Consider the following 460-residue polypeptide: Endoglucanase C (460 aa).

Residues 1–32 (MIKGSSLKRFKSLVMAAIFSVSIISTAIASSA) form the signal peptide. Catalysis depends on glutamate 99, which acts as the Proton donor. The active-site Nucleophile is the aspartate 155. Positions 400 to 460 (KPDLKGDVNN…FAQLKVKLLN (61 aa)) constitute a Dockerin domain.

The protein belongs to the glycosyl hydrolase 8 (cellulase D) family. In terms of assembly, monomer. In terms of processing, there are two forms of the cellulase. The shorter form lacks probably the C-terminal reiterated domains.

The catalysed reaction is Endohydrolysis of (1-&gt;4)-beta-D-glucosidic linkages in cellulose, lichenin and cereal beta-D-glucans.. Its pathway is glycan metabolism; cellulose degradation. Functionally, the biological conversion of cellulose to glucose generally requires three types of hydrolytic enzymes: (1) Endoglucanases which cut internal beta-1,4-glucosidic bonds; (2) Exocellobiohydrolases that cut the disaccharide cellobiose from the non-reducing end of the cellulose polymer chain; (3) Beta-1,4-glucosidases which hydrolyze the cellobiose and other short cello-oligosaccharides to glucose. The protein is Endoglucanase C (celCCC) of Ruminiclostridium cellulolyticum (strain ATCC 35319 / DSM 5812 / JCM 6584 / H10) (Clostridium cellulolyticum).